Reading from the N-terminus, the 372-residue chain is Flap endonuclease 1 (372 aa).

Residues 1–105 (MGVKGLNQLI…GELEKRLLRR (105 aa)) form an N-domain region. Residue Asp-34 coordinates Mg(2+). 2 residues coordinate DNA: Arg-47 and Arg-71. Mg(2+) is bound by residues Asp-87, Glu-159, Glu-161, Asp-180, and Asp-182. Residues 123–254 (EVLKFEKRLV…ATAFKLIKEH (132 aa)) are I-domain. Position 159 (Glu-159) interacts with DNA. 2 residues coordinate DNA: Gly-232 and Asp-234. Position 234 (Asp-234) interacts with Mg(2+). Positions 339-347 (VQGRLDGFF) are interaction with PCNA.

Belongs to the XPG/RAD2 endonuclease family. FEN1 subfamily. Interacts with PCNA. Three molecules of RAD27 bind to one PCNA trimer with each molecule binding to one PCNA monomer. PCNA stimulates the nuclease activity without altering cleavage specificity. It depends on Mg(2+) as a cofactor. Post-translationally, phosphorylated. Phosphorylation upon DNA damage induces relocalization to the nuclear plasma.

Its subcellular location is the nucleus. The protein resides in the nucleolus. The protein localises to the nucleoplasm. It is found in the mitochondrion. In terms of biological role, structure-specific nuclease with 5'-flap endonuclease and 5'-3' exonuclease activities involved in DNA replication and repair. During DNA replication, cleaves the 5'-overhanging flap structure that is generated by displacement synthesis when DNA polymerase encounters the 5'-end of a downstream Okazaki fragment. It enters the flap from the 5'-end and then tracks to cleave the flap base, leaving a nick for ligation. Also involved in the long patch base excision repair (LP-BER) pathway, by cleaving within the apurinic/apyrimidinic (AP) site-terminated flap. Acts as a genome stabilization factor that prevents flaps from equilibrating into structures that lead to duplications and deletions. Also possesses 5'-3' exonuclease activity on nicked or gapped double-stranded DNA, and exhibits RNase H activity. Also involved in replication and repair of rDNA and in repairing mitochondrial DNA. The chain is Flap endonuclease 1 from Candida dubliniensis (strain CD36 / ATCC MYA-646 / CBS 7987 / NCPF 3949 / NRRL Y-17841) (Yeast).